The sequence spans 430 residues: Trigger factor (430 aa).

One can recognise a PPIase FKBP-type domain in the interval 157–242 (GDLVALETWS…AVEVSEPVLP (86 aa)).

This sequence belongs to the FKBP-type PPIase family. Tig subfamily.

The protein resides in the cytoplasm. It carries out the reaction [protein]-peptidylproline (omega=180) = [protein]-peptidylproline (omega=0). Involved in protein export. Acts as a chaperone by maintaining the newly synthesized protein in an open conformation. Functions as a peptidyl-prolyl cis-trans isomerase. The protein is Trigger factor of Xanthomonas campestris pv. campestris (strain B100).